Consider the following 155-residue polypeptide: UPF0266 membrane protein LMHCC_1856 (155 aa).

The next 3 helical transmembrane spans lie at 8–28, 46–66, and 70–90; these read IFLFAANILTVLYILYNDAVI, RWDGYIFVGIIVLLFVSNTFF, and PFSTSVLLGIMGVLFIYICFF.

It belongs to the UPF0266 family.

It is found in the cell membrane. The sequence is that of UPF0266 membrane protein LMHCC_1856 from Listeria monocytogenes serotype 4a (strain HCC23).